Here is a 433-residue protein sequence, read N- to C-terminus: 3-phosphoshikimate 1-carboxyvinyltransferase (433 aa).

3-phosphoshikimate-binding residues include Lys-22, Ser-23, and Arg-27. A phosphoenolpyruvate-binding site is contributed by Lys-22. Positions 95 and 123 each coordinate phosphoenolpyruvate. 3-phosphoshikimate contacts are provided by Ser-167, Gln-169, Asp-315, and Lys-342. Gln-169 contacts phosphoenolpyruvate. Asp-315 (proton acceptor) is an active-site residue. Residues Arg-346 and Arg-387 each coordinate phosphoenolpyruvate.

It belongs to the EPSP synthase family. In terms of assembly, monomer.

The protein resides in the cytoplasm. The enzyme catalyses 3-phosphoshikimate + phosphoenolpyruvate = 5-O-(1-carboxyvinyl)-3-phosphoshikimate + phosphate. The protein operates within metabolic intermediate biosynthesis; chorismate biosynthesis; chorismate from D-erythrose 4-phosphate and phosphoenolpyruvate: step 6/7. Functionally, catalyzes the transfer of the enolpyruvyl moiety of phosphoenolpyruvate (PEP) to the 5-hydroxyl of shikimate-3-phosphate (S3P) to produce enolpyruvyl shikimate-3-phosphate and inorganic phosphate. The protein is 3-phosphoshikimate 1-carboxyvinyltransferase of Legionella pneumophila (strain Paris).